The chain runs to 195 residues: Chromophore lyase CpcT/CpeT 2 (195 aa).

The protein belongs to the CpcT/CpeT biliprotein lyase family.

Covalently attaches a chromophore to Cys residue(s) of phycobiliproteins. This chain is Chromophore lyase CpcT/CpeT 2, found in Trichodesmium erythraeum (strain IMS101).